A 141-amino-acid polypeptide reads, in one-letter code: Putative pre-16S rRNA nuclease (141 aa).

Belongs to the YqgF nuclease family.

It is found in the cytoplasm. Could be a nuclease involved in processing of the 5'-end of pre-16S rRNA. This chain is Putative pre-16S rRNA nuclease, found in Clostridioides difficile (strain 630) (Peptoclostridium difficile).